The primary structure comprises 347 residues: Protein RecA (347 aa).

Residue 66–73 (GPESSGKT) coordinates ATP.

This sequence belongs to the RecA family.

It localises to the cytoplasm. Its function is as follows. Can catalyze the hydrolysis of ATP in the presence of single-stranded DNA, the ATP-dependent uptake of single-stranded DNA by duplex DNA, and the ATP-dependent hybridization of homologous single-stranded DNAs. It interacts with LexA causing its activation and leading to its autocatalytic cleavage. This Burkholderia cepacia (Pseudomonas cepacia) protein is Protein RecA.